The following is a 185-amino-acid chain: UPF0397 protein PAM_019 (185 aa).

5 consecutive transmembrane segments (helical) span residues 13–33 (IGLSAAIFFVLSCFASIPVGF), 42–62 (AFLAFIAVAFGPAVGFYVGLI), 69–89 (FILFGNVSWNWVLCSALIGFI), 109–129 (IVYFWLYQVAFNFIIWGFFAP), and 143–163 (VYLQSFLIVISNILAYSVVGI).

This sequence belongs to the UPF0397 family.

Its subcellular location is the cell membrane. The chain is UPF0397 protein PAM_019 from Onion yellows phytoplasma (strain OY-M).